The primary structure comprises 877 residues: Alanine--tRNA ligase (877 aa).

Residues His567, His571, Cys669, and His673 each contribute to the Zn(2+) site.

It belongs to the class-II aminoacyl-tRNA synthetase family. Zn(2+) is required as a cofactor.

It is found in the cytoplasm. The enzyme catalyses tRNA(Ala) + L-alanine + ATP = L-alanyl-tRNA(Ala) + AMP + diphosphate. In terms of biological role, catalyzes the attachment of alanine to tRNA(Ala) in a two-step reaction: alanine is first activated by ATP to form Ala-AMP and then transferred to the acceptor end of tRNA(Ala). Also edits incorrectly charged Ser-tRNA(Ala) and Gly-tRNA(Ala) via its editing domain. The sequence is that of Alanine--tRNA ligase from Rickettsia prowazekii (strain Madrid E).